A 1266-amino-acid chain; its full sequence is 5-oxoprolinase 1 (1266 aa).

This sequence belongs to the oxoprolinase family. As to expression, expressed in roots, stems, leaves, flowers and siliques.

It localises to the cytoplasm. The catalysed reaction is 5-oxo-L-proline + ATP + 2 H2O = L-glutamate + ADP + phosphate + H(+). Functionally, catalyzes the cleavage of 5-oxo-L-proline to form L-glutamate coupled to the hydrolysis of ATP to ADP and inorganic phosphate. Acts in the glutathione degradation pathway. The chain is 5-oxoprolinase 1 from Arabidopsis thaliana (Mouse-ear cress).